We begin with the raw amino-acid sequence, 108 residues long: Protein FATTY ACID EXPORT 7 (108 aa).

3 helical membrane passes run 32–52 (ISLV…TELP), 55–75 (PVLA…MMGS), and 85–105 (PAGL…HGLI).

Belongs to the TMEM14 family.

The protein localises to the membrane. In terms of biological role, may be involved in free fatty acids export. The chain is Protein FATTY ACID EXPORT 7 from Arabidopsis thaliana (Mouse-ear cress).